Here is a 1384-residue protein sequence, read N- to C-terminus: MLRKLTVDQINDWFTIGKTVTNVELLGLPPAFPAEAPREEVQRSEEVPSEAPTAQAQDPVKATALARPASAFGRSLSQRSSEVEYINKYRQLEAQELDIYGQDQPPSGPGLRSPLAKISNVACIPETTYKYPDLPINRCKEEVISLIESNSVVIIHGATGSGKSTQLPQYVLDHYTQRSAFCNIVVTQPRKIGASSIARWISKERSWTLGGLVGYQVGLEKTATEDTRLIYMTTGVLLQKIVSAKSLMEFTHVFIDEVHERTEEMDFLLLVVRKLLRTNSRFVKVILMSATINCKQFADYFAVPVQNKMNPAYVFEVEGKPHTIEQYYLNDLGHIYHSGLPPYRLEEPVITKDVYEVAVSLIQMFDDLDMKESGNKTWSGAQFVSERSSVLVFLPGLGEINYMHELLTNMIHKRLQVYPLHSSVTLEEQNNVFLSPVPGYRKIILSTNIAESSVTVPDVKYVIDFCLTRTLVCDEDTNYQSLRLSWASKTSCDQRKGRAGRVSKGYCYRLIHRDFWDSAIPDHVVPEMLRCPLGSTVLKVKLLDMGEPRALLATALSPPSLSDIERTILLLKEVGALAVSGQREDENPHDGELTFLGRVLAQLPVSQQLGKLIVLGHVFGCLDECLIIAAALSLKNFFTMPFRQHLDGYRNKVHFSGSSRSDCLALVEAFRAWQACRQRGELRHPKDELDWGRLNYIQIKRIREVAELYEELKNRISQFNMFVDPRHPVLDQEYPYKQRFILQVVLAGAFYPNYFTFGQPDEEMAVRELAGRDPKTTVVLKHIPPYGFLYYKQLQSLFRQCGQVKSIVFDGAKAFVEFSRNPTERFKTLPAVNLAVKMSQLKVSLELSIHAAEEIEGKVQGGSVSKLRNTRVNVDFQKQTVDPMQVSFNTLDRPRTVADLLLTVDVTEVVEVGHFWGYRIDERNAELLRQLTAEINRLELVPLPIHPHPDLVCLAPFTDYNKESYFRAQILYVSGNSAEVFFVDYGNRSHVDLDLLREIPCQLLELPFQALEFKICKMRPSAKSLICGEHWSGGANGRFAALVSGCPLLVKVFSIVHSVLHVDVYRYSGAQDAVNIRDVLIREGYAELAEESYESKQSYEVLKGFFAKSVDTMPDGSVSSPMKDDEKHLIQILLESFASNRLGAPNCKAVLHGPFNPYELKCHSLTRISKFRCVWIEKESINSVVISDSPADLHQRMLVAASLSVNETGSTMLLRETSLMPHIPGLPALLSMLFAPVMELRVDREGKCYTGVLCGLGWNSTTEAPILPEHDIELAFDVCFNVEDIVEINILRAAINKLACDGPHGPKYLGPERIAQLQENARQKLLGLFCRLKPREKITPQWHEKPYEWNQVDPRLVIEQAEREGGPGKSTCLYQLHTPVVLSP.

The interval 35-60 is disordered; it reads EAPREEVQRSEEVPSEAPTAQAQDPV. The span at 36-46 shows a compositional bias: basic and acidic residues; that stretch reads APREEVQRSEE. Residues 144-310 form the Helicase ATP-binding domain; the sequence is ISLIESNSVV…FAVPVQNKMN (167 aa). Residue 157-164 participates in ATP binding; sequence GATGSGKS. A DEAH box motif is present at residues 256–259; sequence DEVH. Residues 379 to 546 enclose the Helicase C-terminal domain; sequence SGAQFVSERS…VLKVKLLDMG (168 aa). One can recognise a Tudor domain in the interval 946-1006; the sequence is HPHPDLVCLA…REIPCQLLEL (61 aa).

It belongs to the DEAD box helicase family. DEAH subfamily. In terms of assembly, interacts with piRNA-associated proteins PIWIL1 and PIWIL4.

Its subcellular location is the cytoplasm. The protein localises to the nucleus. It carries out the reaction ATP + H2O = ADP + phosphate + H(+). Its function is as follows. ATP-binding RNA helicase which plays a central role during spermatogenesis by repressing transposable elements and preventing their mobilization, which is essential for the germline integrity. Acts via the piRNA metabolic process, which mediates the repression of transposable elements during meiosis by forming complexes composed of piRNAs and Piwi proteins and governs the methylation and subsequent repression of transposons. Acts downstream of piRNA biogenesis: exclusively required for transposon silencing in the nucleus, suggesting that it acts as a nuclear effector in the nucleus together with PIWIL4. The protein is ATP-dependent RNA helicase TDRD9 of Rattus norvegicus (Rat).